The chain runs to 485 residues: MTTVDNRQDFKVADLSLAEFGRKEITLAEHEMPGLMSIRKEYAEAQPLAGARVTGSLHMTVQTAVLIETLVALGAEVRWASCNIFSTQDHAAAAIAVGPNGTPDNPQGVPVFAWKGETLEEYWWCTEQALTWPNTPTGGPNMILDDGGDATLLVHKGVEYEKDGKVPSVDTAESDEHRVILELLHRTITDGSQKWTQLASEIRGVTEETTTGVHRLYEMHRDGTLLFPAINVNDAVTKSKFDNKYGCRHSLIDGINRATDVLIGGKTAVVCGYGDVGKGCAESLRGQGARVIVTEIDPICALQAAMDGYQVTTLDEVIDKADIFVTTTGNKDIIMASDMAKMKHQAIVGNIGHFDNEIDMAGLAQIPGIVKDEVKPQVHTWKFPDGKVLIVLSEGRLLNLGNATGHPSFVMSNSFADQTLAQIELFTKPDEYPTDVYVLPKHLDEKVARLHLDSLGVKLTTLRPEQAAYIGVEVEGPFKSDHYRY.

Residues Thr-60, Asp-146, and Glu-208 each coordinate substrate. 209–211 is an NAD(+) binding site; that stretch reads TTT. Residues Lys-238 and Asp-242 each coordinate substrate. NAD(+)-binding positions include Asn-243, 272–277, Glu-295, Asn-330, 351–353, and Asn-399; these read GYGDVG and IGH.

The protein belongs to the adenosylhomocysteinase family. Requires NAD(+) as cofactor.

It localises to the cytoplasm. It carries out the reaction S-adenosyl-L-homocysteine + H2O = L-homocysteine + adenosine. The protein operates within amino-acid biosynthesis; L-homocysteine biosynthesis; L-homocysteine from S-adenosyl-L-homocysteine: step 1/1. Its function is as follows. May play a key role in the regulation of the intracellular concentration of adenosylhomocysteine. The chain is Adenosylhomocysteinase from Streptomyces avermitilis (strain ATCC 31267 / DSM 46492 / JCM 5070 / NBRC 14893 / NCIMB 12804 / NRRL 8165 / MA-4680).